Here is a 514-residue protein sequence, read N- to C-terminus: Major facilitator superfamily domain-containing protein 4A (514 aa).

5 helical membrane-spanning segments follow: residues 19–39, 53–73, 82–102, 107–127, and 139–159; these read LTYW…GPTL, ISWV…LGGV, LWAL…IPFC, VLAL…TVAN, and AVFL…SPLI. N-linked (GlcNAc...) asparagine glycosylation is found at Asn177 and Asn203. 7 consecutive transmembrane segments (helical) span residues 221 to 241, 307 to 327, 347 to 367, 376 to 396, 400 to 420, 438 to 458, and 466 to 486; these read YAFW…LMLL, FFAI…LTGA, VAGY…LLSI, ATMV…LLIF, VVFL…TFPS, VLVT…GSIF, and FLVC…LLLF.

Belongs to the major facilitator superfamily.

The protein localises to the membrane. In Pongo abelii (Sumatran orangutan), this protein is Major facilitator superfamily domain-containing protein 4A (MFSD4A).